The chain runs to 540 residues: Chaperonin GroEL 2 (540 aa).

ATP is bound by residues 29 to 32 (TLGP), 86 to 90 (DGTTT), G413, 476 to 478 (NAA), and D492.

This sequence belongs to the chaperonin (HSP60) family. Forms a cylinder of 14 subunits composed of two heptameric rings stacked back-to-back. Interacts with the co-chaperonin GroES.

The protein localises to the cytoplasm. It carries out the reaction ATP + H2O + a folded polypeptide = ADP + phosphate + an unfolded polypeptide.. Its function is as follows. Together with its co-chaperonin GroES, plays an essential role in assisting protein folding. The GroEL-GroES system forms a nano-cage that allows encapsulation of the non-native substrate proteins and provides a physical environment optimized to promote and accelerate protein folding. This Streptomyces albus G protein is Chaperonin GroEL 2.